We begin with the raw amino-acid sequence, 617 residues long: MPQYRSRTSTHGRNMAGARALWRATGMGDADFGKPIIAIANSFTQFVPGHVHLKDLGQLVAREIEAAGGVAKEFNTIAVDDGIAMGHGGMLYSLPSRELIADAVEYMVNAHCADALVCISNCDKITPGMLMAAMRLNIPTIFVSGGPMEAGKYIADGETRAADLITAMVVAADPTKTDEQAAVMERSACPTCGSCSGMFTANSMNCLTEALGLALPGNGSLLATHADRKRLFVEAGWQIVDLARRYYEQDDEGVLPRRIGGFKAFENAMSLDIAMGGSTNTVLHLLAAAREAELDFTMADIDRLSRRVPNLCKVSPSVSNVHMEDVHRAGGIMGILGALDRAGLIHRDCATVHEKTIGEAIDRWDVMRGGETAKTLYSAAPGGVRTTEAFSQSRRYESLDLDREKGVIRDAEHAFSKDGGLAVLYGNIALDGAIVKTAGVDASILVFEGPARIFESQEDAVAGILGDRVKAGDVVLIRYEGPKGGPGMQEMLYPTSYLKSKGLGKSCALITDGRFSGGTAGLSIGHISPEAAQGGAIGLVEEGDIIAIDIPNRKLDVKLDEATLEARRAAMEAKGKAAWKPAARERVVSAALQAYAALTTSAANGAVRDVTQVQRGR.

A Mg(2+)-binding site is contributed by D81. C122 lines the [2Fe-2S] cluster pocket. Mg(2+)-binding residues include D123 and K124. Residue K124 is modified to N6-carboxylysine. C195 serves as a coordination point for [2Fe-2S] cluster. E490 contributes to the Mg(2+) binding site. The active-site Proton acceptor is the S516.

It belongs to the IlvD/Edd family. As to quaternary structure, homodimer. [2Fe-2S] cluster serves as cofactor. It depends on Mg(2+) as a cofactor.

It catalyses the reaction (2R)-2,3-dihydroxy-3-methylbutanoate = 3-methyl-2-oxobutanoate + H2O. The catalysed reaction is (2R,3R)-2,3-dihydroxy-3-methylpentanoate = (S)-3-methyl-2-oxopentanoate + H2O. The protein operates within amino-acid biosynthesis; L-isoleucine biosynthesis; L-isoleucine from 2-oxobutanoate: step 3/4. It functions in the pathway amino-acid biosynthesis; L-valine biosynthesis; L-valine from pyruvate: step 3/4. Functions in the biosynthesis of branched-chain amino acids. Catalyzes the dehydration of (2R,3R)-2,3-dihydroxy-3-methylpentanoate (2,3-dihydroxy-3-methylvalerate) into 2-oxo-3-methylpentanoate (2-oxo-3-methylvalerate) and of (2R)-2,3-dihydroxy-3-methylbutanoate (2,3-dihydroxyisovalerate) into 2-oxo-3-methylbutanoate (2-oxoisovalerate), the penultimate precursor to L-isoleucine and L-valine, respectively. This Acidiphilium cryptum (strain JF-5) protein is Dihydroxy-acid dehydratase.